Consider the following 159-residue polypeptide: Phosphopantetheine adenylyltransferase (159 aa).

Thr-10 contacts substrate. ATP contacts are provided by residues 10–11 (TF) and His-18. Residues Lys-42, Met-74, and Arg-88 each contribute to the substrate site. ATP is bound by residues 89–91 (GLR), Glu-99, and 124–130 (WSFISSS).

It belongs to the bacterial CoaD family. As to quaternary structure, homohexamer. Mg(2+) serves as cofactor.

Its subcellular location is the cytoplasm. The enzyme catalyses (R)-4'-phosphopantetheine + ATP + H(+) = 3'-dephospho-CoA + diphosphate. Its pathway is cofactor biosynthesis; coenzyme A biosynthesis; CoA from (R)-pantothenate: step 4/5. Functionally, reversibly transfers an adenylyl group from ATP to 4'-phosphopantetheine, yielding dephospho-CoA (dPCoA) and pyrophosphate. The polypeptide is Phosphopantetheine adenylyltransferase (Shigella dysenteriae serotype 1 (strain Sd197)).